Consider the following 198-residue polypeptide: FMN-dependent NADH:quinone oxidoreductase (198 aa).

FMN contacts are provided by residues serine 9 and 95–98 (MYNF).

Belongs to the azoreductase type 1 family. In terms of assembly, homodimer. Requires FMN as cofactor.

The enzyme catalyses 2 a quinone + NADH + H(+) = 2 a 1,4-benzosemiquinone + NAD(+). It catalyses the reaction N,N-dimethyl-1,4-phenylenediamine + anthranilate + 2 NAD(+) = 2-(4-dimethylaminophenyl)diazenylbenzoate + 2 NADH + 2 H(+). Its function is as follows. Quinone reductase that provides resistance to thiol-specific stress caused by electrophilic quinones. Functionally, also exhibits azoreductase activity. Catalyzes the reductive cleavage of the azo bond in aromatic azo compounds to the corresponding amines. The protein is FMN-dependent NADH:quinone oxidoreductase of Alcanivorax borkumensis (strain ATCC 700651 / DSM 11573 / NCIMB 13689 / SK2).